Here is a 646-residue protein sequence, read N- to C-terminus: Lipoteichoic acid synthase (646 aa).

At 1–7 (MSLPKKK) the chain is on the cytoplasmic side. A helical transmembrane segment spans residues 8-28 (IGIFAFFLLTVFTITLKTYFS). At 29–43 (YYVDFSLGVKGLVQN) the chain is on the extracellular side. A helical membrane pass occupies residues 44 to 64 (LILIMNPYSLIALVLSVFLFF). Topologically, residues 65–68 (KGKK) are cytoplasmic. Residues 69-89 (AFWFIFIGGFLLTFLLYANVV) traverse the membrane as a helical segment. Residues 90–119 (YFRFFSDFLTFSTLNQAGNVESMGGAVSAS) are Extracellular-facing. A helical transmembrane segment spans residues 120 to 140 (FKWYDFVYFIDTIIYLAILIF). Over 141-153 (KRKWLDNRAFSKK) the chain is Cytoplasmic. Residues 154–174 (FVPVVMATSVALFFLNLAFAE) form a helical membrane-spanning segment. Residues 175-646 (TDRPELLTRT…KSGPKGNEKK (472 aa)) are Extracellular-facing. Residues glutamate 255 and threonine 300 each coordinate Mn(2+). The active site involves threonine 300. A substrate-binding site is contributed by histidine 416. Residues aspartate 475 and histidine 476 each coordinate Mn(2+).

It belongs to the LTA synthase family. Proteolytically cleaved.

It localises to the cell membrane. It is found in the secreted. It participates in cell wall biogenesis; lipoteichoic acid biosynthesis. In terms of biological role, catalyzes the polymerization of lipoteichoic acid (LTA) polyglycerol phosphate, a reaction that presumably uses phosphatidylglycerol (PG) as substrate. Is required for staphylococcal growth and cell division process. This chain is Lipoteichoic acid synthase (ltaS), found in Staphylococcus epidermidis (strain ATCC 12228 / FDA PCI 1200).